A 272-amino-acid polypeptide reads, in one-letter code: Tryptophan synthase alpha chain (272 aa).

Active-site proton acceptor residues include Glu-49 and Asp-60.

Belongs to the TrpA family. As to quaternary structure, tetramer of two alpha and two beta chains.

The catalysed reaction is (1S,2R)-1-C-(indol-3-yl)glycerol 3-phosphate + L-serine = D-glyceraldehyde 3-phosphate + L-tryptophan + H2O. It functions in the pathway amino-acid biosynthesis; L-tryptophan biosynthesis; L-tryptophan from chorismate: step 5/5. The alpha subunit is responsible for the aldol cleavage of indoleglycerol phosphate to indole and glyceraldehyde 3-phosphate. This is Tryptophan synthase alpha chain from Hydrogenovibrio crunogenus (strain DSM 25203 / XCL-2) (Thiomicrospira crunogena).